A 321-amino-acid polypeptide reads, in one-letter code: ATP-dependent 6-phosphofructokinase (321 aa).

Glycine 12 provides a ligand contact to ATP. ADP is bound by residues 22–26 (RGVVR) and 55–60 (RYSVSD). ATP contacts are provided by residues 73–74 (RF) and 103–106 (GDGS). Aspartate 104 contacts Mg(2+). 127 to 129 (TID) contributes to the substrate binding site. The active-site Proton acceptor is the aspartate 129. Arginine 156 contacts ADP. Substrate is bound by residues arginine 164 and 171-173 (MGR). ADP contacts are provided by residues 187 to 189 (GCE), lysine 213, and 215 to 217 (KRH). Substrate contacts are provided by residues glutamate 224, arginine 245, and 251-254 (HIQR).

Belongs to the phosphofructokinase type A (PFKA) family. ATP-dependent PFK group I subfamily. Prokaryotic clade 'B1' sub-subfamily. As to quaternary structure, homotetramer. It depends on Mg(2+) as a cofactor.

The protein localises to the cytoplasm. It catalyses the reaction beta-D-fructose 6-phosphate + ATP = beta-D-fructose 1,6-bisphosphate + ADP + H(+). Its pathway is carbohydrate degradation; glycolysis; D-glyceraldehyde 3-phosphate and glycerone phosphate from D-glucose: step 3/4. With respect to regulation, allosterically activated by ADP and other diphosphonucleosides, and allosterically inhibited by phosphoenolpyruvate. Catalyzes the phosphorylation of D-fructose 6-phosphate to fructose 1,6-bisphosphate by ATP, the first committing step of glycolysis. The protein is ATP-dependent 6-phosphofructokinase of Histophilus somni (strain 129Pt) (Haemophilus somnus).